Reading from the N-terminus, the 145-residue chain is uncharacterized protein (145 aa).

The helical transmembrane segment at 63–83 (FLCLPLFLSFLVANLILWLSF) threads the bilayer.

The protein localises to the mitochondrion membrane. This is an uncharacterized protein from Arabidopsis thaliana (Mouse-ear cress).